The chain runs to 229 residues: 4-hydroxy-tetrahydrodipicolinate reductase (229 aa).

Residues 10–15, 78–80, and 102–105 each bind NAD(+); these read GSAGRM, GTT, and SSNM. Catalysis depends on His-133, which acts as the Proton donor/acceptor. His-134 contributes to the (S)-2,3,4,5-tetrahydrodipicolinate binding site. Lys-137 functions as the Proton donor in the catalytic mechanism. Residue 143-144 coordinates (S)-2,3,4,5-tetrahydrodipicolinate; sequence GT.

It belongs to the DapB family.

It is found in the cytoplasm. The enzyme catalyses (S)-2,3,4,5-tetrahydrodipicolinate + NAD(+) + H2O = (2S,4S)-4-hydroxy-2,3,4,5-tetrahydrodipicolinate + NADH + H(+). The catalysed reaction is (S)-2,3,4,5-tetrahydrodipicolinate + NADP(+) + H2O = (2S,4S)-4-hydroxy-2,3,4,5-tetrahydrodipicolinate + NADPH + H(+). It functions in the pathway amino-acid biosynthesis; L-lysine biosynthesis via DAP pathway; (S)-tetrahydrodipicolinate from L-aspartate: step 4/4. Catalyzes the conversion of 4-hydroxy-tetrahydrodipicolinate (HTPA) to tetrahydrodipicolinate. The polypeptide is 4-hydroxy-tetrahydrodipicolinate reductase (Bdellovibrio bacteriovorus (strain ATCC 15356 / DSM 50701 / NCIMB 9529 / HD100)).